A 475-amino-acid chain; its full sequence is Ribulose bisphosphate carboxylase large chain (475 aa).

A propeptide spanning residues 1 to 2 (MA) is cleaved from the precursor. Position 3 is an N-acetylproline (Pro-3). Residue Lys-14 is modified to N6,N6,N6-trimethyllysine. The substrate site is built by Asn-123 and Thr-173. Catalysis depends on Lys-175, which acts as the Proton acceptor. Substrate is bound at residue Lys-177. Residues Lys-201, Asp-203, and Glu-204 each coordinate Mg(2+). At Lys-201 the chain carries N6-carboxylysine. The active-site Proton acceptor is His-294. Substrate-binding residues include Arg-295, His-327, and Ser-379.

This sequence belongs to the RuBisCO large chain family. Type I subfamily. Heterohexadecamer of 8 large chains and 8 small chains. The cofactor is Mg(2+).

It localises to the plastid. The protein localises to the chloroplast. It carries out the reaction 2 (2R)-3-phosphoglycerate + 2 H(+) = D-ribulose 1,5-bisphosphate + CO2 + H2O. It catalyses the reaction D-ribulose 1,5-bisphosphate + O2 = 2-phosphoglycolate + (2R)-3-phosphoglycerate + 2 H(+). RuBisCO catalyzes two reactions: the carboxylation of D-ribulose 1,5-bisphosphate, the primary event in carbon dioxide fixation, as well as the oxidative fragmentation of the pentose substrate in the photorespiration process. Both reactions occur simultaneously and in competition at the same active site. In Nephroselmis olivacea (Green alga), this protein is Ribulose bisphosphate carboxylase large chain.